We begin with the raw amino-acid sequence, 114 residues long: Ribosome-binding factor A (114 aa).

This sequence belongs to the RbfA family. Monomer. Binds 30S ribosomal subunits, but not 50S ribosomal subunits or 70S ribosomes.

It localises to the cytoplasm. One of several proteins that assist in the late maturation steps of the functional core of the 30S ribosomal subunit. Associates with free 30S ribosomal subunits (but not with 30S subunits that are part of 70S ribosomes or polysomes). Required for efficient processing of 16S rRNA. May interact with the 5'-terminal helix region of 16S rRNA. The polypeptide is Ribosome-binding factor A (Vesicomyosocius okutanii subsp. Calyptogena okutanii (strain HA)).